Reading from the N-terminus, the 309-residue chain is 2-phospho-L-lactate transferase (309 aa).

2 residues coordinate 7,8-didemethyl-8-hydroxy-5-deazariboflavin: Asp50 and Lys89.

Belongs to the CofD family. As to quaternary structure, homodimer. Mg(2+) serves as cofactor.

It catalyses the reaction (2S)-lactyl-2-diphospho-5'-guanosine + 7,8-didemethyl-8-hydroxy-5-deazariboflavin = oxidized coenzyme F420-0 + GMP + H(+). It participates in cofactor biosynthesis; coenzyme F420 biosynthesis. Catalyzes the transfer of the 2-phospholactate moiety from (2S)-lactyl-2-diphospho-5'-guanosine to 7,8-didemethyl-8-hydroxy-5-deazariboflavin (FO) with the formation of oxidized coenzyme F420-0 and GMP. The sequence is that of 2-phospho-L-lactate transferase from Methanococcus maripaludis (strain C7 / ATCC BAA-1331).